The chain runs to 336 residues: Plant-specific TFIIB-related protein 2 (336 aa).

A TFIIB-type zinc finger spans residues 2 to 34 (EEETCLDCKRPTIMVVDHSSGDTICSECGLVLE). Zn(2+) is bound by residues cysteine 6, cysteine 9, cysteine 26, and cysteine 29.

In terms of tissue distribution, specifically expressed in reproductive organs and seeds.

Its subcellular location is the nucleus. Its function is as follows. Plant-specific TFIIB-related protein involved in the regulation of endosperm proliferation during the syncytial phase of endosperm development. Does not contribute to RNA polymerase IV or V activities in reproductive tissues. The sequence is that of Plant-specific TFIIB-related protein 2 from Arabidopsis thaliana (Mouse-ear cress).